Consider the following 220-residue polypeptide: Fructose-6-phosphate aldolase 2 (220 aa).

The active-site Schiff-base intermediate with substrate is lysine 85.

The protein belongs to the transaldolase family. Type 3A subfamily. Homodecamer.

It localises to the cytoplasm. It carries out the reaction beta-D-fructose 6-phosphate = dihydroxyacetone + D-glyceraldehyde 3-phosphate. Its function is as follows. Catalyzes the reversible formation of fructose 6-phosphate from dihydroxyacetone and D-glyceraldehyde 3-phosphate via an aldolization reaction. This is Fructose-6-phosphate aldolase 2 (fsaB) from Escherichia coli O6:H1 (strain CFT073 / ATCC 700928 / UPEC).